The sequence spans 171 residues: UPF0398 protein spyM18_1659 (171 aa).

It belongs to the UPF0398 family.

The sequence is that of UPF0398 protein spyM18_1659 from Streptococcus pyogenes serotype M18 (strain MGAS8232).